The primary structure comprises 270 residues: 4-hydroxy-tetrahydrodipicolinate reductase (270 aa).

Residues 8–13 (GALGRM), D34, 102–104 (GTT), and 128–131 (SQNY) each bind NAD(+). The Proton donor/acceptor role is filled by H160. H161 is a (S)-2,3,4,5-tetrahydrodipicolinate binding site. K164 acts as the Proton donor in catalysis. Position 170–171 (170–171 (GT)) interacts with (S)-2,3,4,5-tetrahydrodipicolinate.

The protein belongs to the DapB family.

Its subcellular location is the cytoplasm. It catalyses the reaction (S)-2,3,4,5-tetrahydrodipicolinate + NAD(+) + H2O = (2S,4S)-4-hydroxy-2,3,4,5-tetrahydrodipicolinate + NADH + H(+). It carries out the reaction (S)-2,3,4,5-tetrahydrodipicolinate + NADP(+) + H2O = (2S,4S)-4-hydroxy-2,3,4,5-tetrahydrodipicolinate + NADPH + H(+). The protein operates within amino-acid biosynthesis; L-lysine biosynthesis via DAP pathway; (S)-tetrahydrodipicolinate from L-aspartate: step 4/4. Catalyzes the conversion of 4-hydroxy-tetrahydrodipicolinate (HTPA) to tetrahydrodipicolinate. This chain is 4-hydroxy-tetrahydrodipicolinate reductase, found in Methanococcus maripaludis (strain C7 / ATCC BAA-1331).